The sequence spans 359 residues: E3 ubiquitin-protein ligase RNF146 (359 aa).

The RING-type zinc finger occupies 36–74 (CAICLQTCVHPVSLPCKHVFCYLCVKGASWLGKRCALCR). Residues Lys84 and Lys94 each participate in a glycyl lysine isopeptide (Lys-Gly) (interchain with G-Cter in ubiquitin) cross-link. Residues 91-167 (EELKAASRGN…EHGRRRKIKR (77 aa)) form the WWE domain. Positions 107, 110, and 114 each coordinate a glycoprotein. Lys130 is covalently cross-linked (Glycyl lysine isopeptide (Lys-Gly) (interchain with G-Cter in ubiquitin)). Residues Tyr144, Gln153, Arg163, and Lys175 each coordinate a glycoprotein. Lys175 is covalently cross-linked (Glycyl lysine isopeptide (Lys-Gly) (interchain with G-Cter in ubiquitin)). Positions 259 to 359 (ERSHRGEGEE…PDGQCTVTEV (101 aa)) are disordered. The span at 284–298 (SVEETESDASSDSED) shows a compositional bias: acidic residues. Ser290 and Ser294 each carry phosphoserine. Over residues 306-322 (HSLTQQRLLVPNANQTV) the composition is skewed to polar residues.

In terms of assembly, can form homooligomers. Interacts with PARsylated AXIN1, AXIN2, BLZF1, CASC3, H1-2, IPO7, LIG3, NCL, PARP1, XRCC1, XRCC5 and XRCC6. Interacts with DDB1, DHX15, IQGAP1, LRPPRC, PARP2, PRKDC, RUVBL2, TNKS1 and TNKS2. Binding often leads to interactor ubiquitination, in the presence of the appropriate E1 and E2 enzymes, and proteasomal degradation. Post-translationally, ubiquitinated; autoubiquitinated. Autoubiquitination is enhanced upon poly(ADP-ribose)-binding.

Its subcellular location is the cytoplasm. It is found in the cytosol. The protein resides in the nucleus. It carries out the reaction S-ubiquitinyl-[E2 ubiquitin-conjugating enzyme]-L-cysteine + [acceptor protein]-L-lysine = [E2 ubiquitin-conjugating enzyme]-L-cysteine + N(6)-ubiquitinyl-[acceptor protein]-L-lysine.. It participates in protein modification; protein ubiquitination. Its function is as follows. E3 ubiquitin-protein ligase that specifically binds poly-ADP-ribosylated (PARsylated) proteins and mediates their ubiquitination and subsequent degradation. May regulate many important biological processes, such as cell survival and DNA damage response. Acts as an activator of the Wnt signaling pathway by mediating the ubiquitination of PARsylated AXIN1 and AXIN2, 2 key components of the beta-catenin destruction complex. Acts in cooperation with tankyrase proteins (TNKS and TNKS2), which mediate PARsylation of target proteins AXIN1, AXIN2, BLZF1, CASC3, TNKS and TNKS2. Recognizes and binds tankyrase-dependent PARsylated proteins via its WWE domain and mediates their ubiquitination, leading to their degradation. Different ubiquitin linkage types have been observed: TNKS2 undergoes ubiquitination at 'Lys-48' and 'Lys-63', while AXIN1 is only ubiquitinated at 'Lys-48'. May regulate TNKS and TNKS2 subcellular location, preventing aggregation at a centrosomal location. Neuroprotective protein. Protects the brain against N-methyl-D-aspartate (NMDA) receptor-mediated glutamate excitotoxicity and ischemia, by interfering with PAR-induced cell death, called parthanatos. Prevents nuclear translocation of AIFM1 in a PAR-binding dependent manner. Does not affect PARP1 activation. Protects against cell death induced by DNA damaging agents, such as N-methyl-N-nitro-N-nitrosoguanidine (MNNG) and rescues cells from G1 arrest. Promotes cell survival after gamma-irradiation. Facilitates DNA repair. This chain is E3 ubiquitin-protein ligase RNF146 (RNF146), found in Ailuropoda melanoleuca (Giant panda).